A 104-amino-acid polypeptide reads, in one-letter code: MRKIRKGDEVVVITGKDKGKRGTVLRVLETKLVVEGVNVAKKHQKPNPVRGVAGGIVEKTMPIDASNVAIFNPASQKADRVGFKVLEDGRKVRVFKSSGEVIGA.

It belongs to the universal ribosomal protein uL24 family. In terms of assembly, part of the 50S ribosomal subunit.

In terms of biological role, one of two assembly initiator proteins, it binds directly to the 5'-end of the 23S rRNA, where it nucleates assembly of the 50S subunit. One of the proteins that surrounds the polypeptide exit tunnel on the outside of the subunit. This chain is Large ribosomal subunit protein uL24, found in Chromobacterium violaceum (strain ATCC 12472 / DSM 30191 / JCM 1249 / CCUG 213 / NBRC 12614 / NCIMB 9131 / NCTC 9757 / MK).